We begin with the raw amino-acid sequence, 139 residues long: Large-conductance mechanosensitive channel (139 aa).

Helical transmembrane passes span 19-39 (VGVIIGAAFGGIVSSMVADII), 40-60 (MPIVGAVTGGLDFSNYFLPLS), and 81-101 (GNFLTLTLNFLIVAFVLFMVI).

Belongs to the MscL family. As to quaternary structure, homopentamer.

The protein localises to the cell inner membrane. In terms of biological role, channel that opens in response to stretch forces in the membrane lipid bilayer. May participate in the regulation of osmotic pressure changes within the cell. The protein is Large-conductance mechanosensitive channel of Nitrobacter winogradskyi (strain ATCC 25391 / DSM 10237 / CIP 104748 / NCIMB 11846 / Nb-255).